Reading from the N-terminus, the 340-residue chain is Eukaryotic translation initiation factor 3 subunit I (340 aa).

5 WD repeats span residues 8–47 (GHER…RLGT), 50–91 (GHQG…KVWD), 150–189 (CTES…QLEN), 194–233 (EFDH…ILKT), and 291–330 (GHFG…FDFM).

The protein belongs to the eIF-3 subunit I family. In terms of assembly, component of the eukaryotic translation initiation factor 3 (eIF-3) complex.

The protein localises to the cytoplasm. In terms of biological role, component of the eukaryotic translation initiation factor 3 (eIF-3) complex, which is involved in protein synthesis of a specialized repertoire of mRNAs and, together with other initiation factors, stimulates binding of mRNA and methionyl-tRNAi to the 40S ribosome. The eIF-3 complex specifically targets and initiates translation of a subset of mRNAs involved in cell proliferation. This is Eukaryotic translation initiation factor 3 subunit I (tif34) from Aspergillus fumigatus (strain CBS 144.89 / FGSC A1163 / CEA10) (Neosartorya fumigata).